Here is a 475-residue protein sequence, read N- to C-terminus: MSQLDVLIVDDEESIRNLIAANLKDEGFNPKVAANSTQALKILSEKPVSAVILDIWLQGSEIDGLGILEIIKKRYPLMPVIIISGHGTIETAVNAIKMGAYDYIEKPFNNDKLVILLKRACEVTKLKRENIDLKSKVIDKTELVGGCSVTLKYKMEIEKAASSSSRIMIHGKVGSGKELAARLIHKQSKRVNNPFIIFSPTCMTTEKINQELFGESEKQENNTKRPTILEFANNGTLYIDEVSNIPIPIQVKLLKFLKDQTITKPCGKNIKVDIKIITGTSKNIQDEVNNGKFLEDLYYRLNVSSLKVPSLYERKEDIPLLVKYFVKQLSKFSGLKERNFADETIAALQSYEWPGNIRQLRNVVEWTLIMNPLTTGNNEIIKPYMIPSEILANSANLTKLEDSFDMLSMPLREAREVFERQYLSAQMSRFNNNISKTSSFVGMERSALHRKLKLLSLHIPPTNRINEEEYEEANA.

Positions 5 to 121 (DVLIVDDEES…KLVILLKRAC (117 aa)) constitute a Response regulatory domain. At aspartate 54 the chain carries 4-aspartylphosphate. In terms of domain architecture, Sigma-54 factor interaction spans 143–369 (LVGGCSVTLK…LRNVVEWTLI (227 aa)). ATP contacts are provided by residues 171 to 178 (GKVGSGKE) and 232 to 241 (ANNGTLYIDE).

Functionally, member of the two-component regulatory system RF_0895/RF_0427. This chain is Putative response regulator NtrX-like, found in Rickettsia felis (strain ATCC VR-1525 / URRWXCal2) (Rickettsia azadi).